Here is a 209-residue protein sequence, read N- to C-terminus: 2-phospho-L-lactate guanylyltransferase (209 aa).

The protein belongs to the CofC family. As to quaternary structure, homodimer.

The catalysed reaction is (2S)-2-phospholactate + GTP + H(+) = (2S)-lactyl-2-diphospho-5'-guanosine + diphosphate. The protein operates within cofactor biosynthesis; coenzyme F420 biosynthesis. In terms of biological role, guanylyltransferase that catalyzes the activation of (2S)-2-phospholactate (2-PL) as (2S)-lactyl-2-diphospho-5'-guanosine, via the condensation of 2-PL with GTP. It is involved in the biosynthesis of coenzyme F420, a hydride carrier cofactor. This chain is 2-phospho-L-lactate guanylyltransferase, found in Halobacterium salinarum (strain ATCC 29341 / DSM 671 / R1).